We begin with the raw amino-acid sequence, 100 residues long: NADH-quinone oxidoreductase subunit K (100 aa).

The next 3 membrane-spanning stretches (helical) occupy residues 4 to 24 (LSHGLILAAILFVLGLTGMII), 28 to 48 (LLFMLLGLEIMINASALAFVV), and 60 to 80 (VMYILAVTLAAAEASIGLALL).

Belongs to the complex I subunit 4L family. As to quaternary structure, NDH-1 is composed of 13 different subunits. Subunits NuoA, H, J, K, L, M, N constitute the membrane sector of the complex.

The protein resides in the cell inner membrane. It carries out the reaction a quinone + NADH + 5 H(+)(in) = a quinol + NAD(+) + 4 H(+)(out). In terms of biological role, NDH-1 shuttles electrons from NADH, via FMN and iron-sulfur (Fe-S) centers, to quinones in the respiratory chain. The immediate electron acceptor for the enzyme in this species is believed to be ubiquinone. Couples the redox reaction to proton translocation (for every two electrons transferred, four hydrogen ions are translocated across the cytoplasmic membrane), and thus conserves the redox energy in a proton gradient. This is NADH-quinone oxidoreductase subunit K from Sodalis glossinidius (strain morsitans).